The primary structure comprises 348 residues: Aspartate carbamoyltransferase catalytic subunit (348 aa).

Residues Arg-59 and Thr-60 each contribute to the carbamoyl phosphate site. Lys-87 provides a ligand contact to L-aspartate. The carbamoyl phosphate site is built by Arg-109, His-142, and Gln-145. Residues Arg-182 and Arg-253 each contribute to the L-aspartate site. Residues Gly-294 and Pro-295 each contribute to the carbamoyl phosphate site.

The protein belongs to the aspartate/ornithine carbamoyltransferase superfamily. ATCase family. As to quaternary structure, heterododecamer (2C3:3R2) of six catalytic PyrB chains organized as two trimers (C3), and six regulatory PyrI chains organized as three dimers (R2).

The catalysed reaction is carbamoyl phosphate + L-aspartate = N-carbamoyl-L-aspartate + phosphate + H(+). The protein operates within pyrimidine metabolism; UMP biosynthesis via de novo pathway; (S)-dihydroorotate from bicarbonate: step 2/3. In terms of biological role, catalyzes the condensation of carbamoyl phosphate and aspartate to form carbamoyl aspartate and inorganic phosphate, the committed step in the de novo pyrimidine nucleotide biosynthesis pathway. This chain is Aspartate carbamoyltransferase catalytic subunit, found in Prochlorococcus marinus (strain MIT 9303).